We begin with the raw amino-acid sequence, 274 residues long: Long chain fatty acid elongase 6 (274 aa).

Topologically, residues 1-30 are extracellular; the sequence is MPQGEVSFFEVLTTAPFSHELSKKHIAQTQ. A helical membrane pass occupies residues 31-51; that stretch reads YAAFWISMAYVVVIFGLKAVM. At 52-69 the chain is on the cytoplasmic side; sequence TNRKPFDLTGPLNLWNAG. Residues 70-90 traverse the membrane as a helical segment; it reads LAIFSTLGSLATTFGLLHEFF. The Extracellular portion of the chain corresponds to 91–111; sequence SRGFFESYIHIGDFYNGLSGM. A helical membrane pass occupies residues 112–132; it reads FTWLFVLSKVAEFGDTLFIIL. Topologically, residues 133 to 135 are cytoplasmic; that stretch reads RKK. Residues 136–156 traverse the membrane as a helical segment; it reads PLMFLHWYHHVLTMNYAFMSF. The Extracellular segment spans residues 157–159; the sequence is EAN. Residues 160-180 traverse the membrane as a helical segment; that stretch reads LGFNTWITWMNFSVHSIMYGY. The Cytoplasmic segment spans residues 181–202; it reads YMLRSFGVKVPAWIAKNITTMQ. Residues 203 to 223 form a helical membrane-spanning segment; sequence ILQFVITHFILFHVGYLAVTG. Topologically, residues 224 to 230 are extracellular; the sequence is QSVDSTP. A helical transmembrane segment spans residues 231-251; that stretch reads GYYWFCLLMEISYVVLFGNFY. The Cytoplasmic segment spans residues 252–274; it reads YQSYIKGGGKKFNAEKKTEKKIE.

Belongs to the ELO family. As to expression, expressed in the gut, neurons, pharynx and muscles of the vulva.

Its subcellular location is the membrane. The catalysed reaction is isopentadecanoyl-CoA + malonyl-CoA + H(+) = 3-oxoisoheptadecanoyl-CoA + CO2 + CoA. Its pathway is lipid metabolism; fatty acid biosynthesis. Catalyzes the first and rate-limiting reaction of the four reactions that constitute the long-chain fatty acids elongation cycle. Uses malonyl-CoA to add 2 carbons per cycle to the chain of long-chain fatty acids. Condensing enzyme required for the formation of isoheptadecanoate (C17iso), which plays critical roles in animal development and growth. In Caenorhabditis elegans, this protein is Long chain fatty acid elongase 6 (elo-6).